The following is a 192-amino-acid chain: Interleukin-18 (192 aa).

Positions 1–35 (MAAEPEDNCISFVEMKFINNTLYFVAENDEDLESD) are excised as a propeptide.

This sequence belongs to the IL-1 family. In terms of assembly, forms a ternary complex with ligand-binding receptor subunit IL18R1 and signaling receptor subunit IL18RAP at the plasma membrane. Mature IL18 first binds to IL18R1 forming a low affinity binary complex, which then interacts with IL18RAP to form a high affinity ternary complex that signals inside the cell. Interacts with cargo receptor TMED10; the interaction mediates the translocation from the cytoplasm into the ERGIC (endoplasmic reticulum-Golgi intermediate compartment) and thereby secretion. Post-translationally, the pro-IL-18 precursor is processed by CASP1, CASP4 or CASP5 to yield its mature, active form. The pro-IL-18 precursor features autoinhibitory interactions between the propeptide and the post-cleavage-site region, preventing recognition by the IL18R1 receptor. Processing by CASP1, CASP4 or CASP5 induces conformational changes to generate critical receptor-binding sites. The mature form is then secreted and released in the extracellular milieu by passing through the gasdermin-D (GSDMD) pore. In contrast, cleavage by CASP3 inactivates IL18.

The protein localises to the cytoplasm. The protein resides in the cytosol. It is found in the secreted. In terms of biological role, pro-inflammatory cytokine primarily involved in epithelial barrier repair, polarized T-helper 1 (Th1) cell and natural killer (NK) cell immune responses. Upon binding to IL18R1 and IL18RAP, forms a signaling ternary complex which activates NF-kappa-B, triggering synthesis of inflammatory mediators. Synergizes with IL12/interleukin-12 to induce IFNG synthesis from T-helper 1 (Th1) cells and natural killer (NK) cells. Involved in transduction of inflammation downstream of pyroptosis: its mature form is specifically released in the extracellular milieu by passing through the gasdermin-D (GSDMD) pore. The chain is Interleukin-18 (IL18) from Sus scrofa (Pig).